A 518-amino-acid chain; its full sequence is Major facilitator superfamily multidrug transporter mfsC (518 aa).

7 helical membrane-spanning segments follow: residues 27–47 (VLLT…SVLF), 65–85 (WVLI…GQLG), 88–108 (FGLE…NVIN), 123–143 (ISGV…SNTF), 152–172 (ALAI…VVGS), 183–203 (IFWL…LFLP), and 212–232 (PIDI…VYGL). Asn233 carries N-linked (GlcNAc...) asparagine glycosylation. 7 consecutive transmembrane segments (helical) span residues 242–262 (SAAM…FLWV), 281–301 (FLVM…WFFI), 315–335 (ILTA…GVFA), 347–367 (ILVA…FAGP), 380–400 (TAII…SILL), 409–429 (AVAG…ILAG), and 455–475 (AFWL…VCYW).

This sequence belongs to the major facilitator superfamily. EmrB family.

The protein resides in the membrane. Major facilitator superfamily transporter that may be involved in A.fumigatus adaptation to azoles such as vorizonazole. In Aspergillus fumigatus (strain ATCC MYA-4609 / CBS 101355 / FGSC A1100 / Af293) (Neosartorya fumigata), this protein is Major facilitator superfamily multidrug transporter mfsC.